The chain runs to 83 residues: Short neurotoxin VAN-10 (83 aa).

An N-terminal signal peptide occupies residues 1-21 (MKTLLLTLVVVTIVCLDLGYT). 4 disulfide bridges follow: Cys24/Cys45, Cys38/Cys62, Cys64/Cys75, and Cys76/Cys81.

This sequence belongs to the three-finger toxin family. Short-chain subfamily. Type I alpha-neurotoxin sub-subfamily. As to expression, expressed by the venom gland.

The protein resides in the secreted. Binds to muscle nicotinic acetylcholine receptor (nAChR) and inhibit acetylcholine from binding to the receptor, thereby impairing neuromuscular transmission. This is Short neurotoxin VAN-10 from Laticauda laticaudata (Blue-ringed sea krait).